Here is a 171-residue protein sequence, read N- to C-terminus: Thioredoxin-2 (171 aa).

In terms of domain architecture, Thioredoxin spans 41-169; the sequence is AFNASPSTSQ…LQALISANHP (129 aa). A disulfide bridge links Cys95 with Cys98.

It belongs to the thioredoxin family.

Its subcellular location is the cytoplasm. The protein localises to the vacuole. In terms of biological role, thioredoxin involved in responses to oxidative and cell wall stresses. Plays an important role in appressorium formation on hyphal tips. TRX2 may affect invasive growth via the MST11-MST7-PMK1 pathway since it is required for the proper folding or dimerization of MAPKK MST7. The chain is Thioredoxin-2 from Pyricularia oryzae (strain 70-15 / ATCC MYA-4617 / FGSC 8958) (Rice blast fungus).